The following is a 684-amino-acid chain: Sorbicillinoid biosynthetic cluster transcription factor 2 (684 aa).

The interval 114-151 (ISSAPSLETPPESVAASPPTVDSIPVSHHVNEDPEAEP) is disordered.

Its subcellular location is the nucleus. Functionally, transcription factor that acts in concert with sorR1 which is a transcriptional activator of the gene cluster that mediates the biosynthesis of sorbicillinoids, a diverse group of yellow secondary metabolites that restrict growth of competing pathogenic fungi but not of bacteria. This chain is Sorbicillinoid biosynthetic cluster transcription factor 2, found in Penicillium rubens (strain ATCC 28089 / DSM 1075 / NRRL 1951 / Wisconsin 54-1255) (Penicillium chrysogenum).